A 450-amino-acid polypeptide reads, in one-letter code: Perilipin-2 (450 aa).

At A2 the chain carries N-acetylalanine. S215 is subject to Phosphoserine. Y232 is subject to Phosphotyrosine. Positions 411–450 (ESESAQAPGTTRRPGRWSRKHPKPVPVSNAEGSQPDDSSS) are disordered. Positions 423–433 (RPGRWSRKHPK) are enriched in basic residues. The span at 440–450 (AEGSQPDDSSS) shows a compositional bias: polar residues.

The protein belongs to the perilipin family. As to quaternary structure, interacts with IRGC. In terms of processing, acylated; primarily with C14, C16 and C18 fatty acids. Post-translationally, phosphorylation at Tyr-232 by isoform 1 of CHKA (CHKalpha2) promotes dissociation from lipid droplets: dissociation is followed by recruitment of autophagosome machinery to lipid droplets and subsequent lipid droplet lipolysis. Polyubiquitination of Nt-acetylatable A-PLIN2 by MARCHF6 lead to degradation by 26S proteasomes. In terms of tissue distribution, milk lipid globules.

It is found in the membrane. Its subcellular location is the lipid droplet. Structural component of lipid droplets, which is required for the formation and maintenance of lipid storage droplets. In Bos taurus (Bovine), this protein is Perilipin-2 (PLIN2).